Here is a 415-residue protein sequence, read N- to C-terminus: Glutamyl-tRNA reductase (415 aa).

Substrate is bound by residues 49–52 (TCNR), Ser-106, 111–113 (EPQ), and Gln-117. The Nucleophile role is filled by Cys-50. Residue 186–191 (GAGETI) coordinates NADP(+).

This sequence belongs to the glutamyl-tRNA reductase family. Homodimer.

The catalysed reaction is (S)-4-amino-5-oxopentanoate + tRNA(Glu) + NADP(+) = L-glutamyl-tRNA(Glu) + NADPH + H(+). Its pathway is porphyrin-containing compound metabolism; protoporphyrin-IX biosynthesis; 5-aminolevulinate from L-glutamyl-tRNA(Glu): step 1/2. In terms of biological role, catalyzes the NADPH-dependent reduction of glutamyl-tRNA(Glu) to glutamate 1-semialdehyde (GSA). This Teredinibacter turnerae (strain ATCC 39867 / T7901) protein is Glutamyl-tRNA reductase.